The sequence spans 284 residues: 2-dehydro-3-deoxyphosphooctonate aldolase (284 aa).

The protein belongs to the KdsA family.

The protein resides in the cytoplasm. The enzyme catalyses D-arabinose 5-phosphate + phosphoenolpyruvate + H2O = 3-deoxy-alpha-D-manno-2-octulosonate-8-phosphate + phosphate. Its pathway is carbohydrate biosynthesis; 3-deoxy-D-manno-octulosonate biosynthesis; 3-deoxy-D-manno-octulosonate from D-ribulose 5-phosphate: step 2/3. It functions in the pathway bacterial outer membrane biogenesis; lipopolysaccharide biosynthesis. The sequence is that of 2-dehydro-3-deoxyphosphooctonate aldolase from Burkholderia cenocepacia (strain HI2424).